The following is a 70-amino-acid chain: Large ribosomal subunit protein bL31 (70 aa).

Positions 16, 18, 37, and 40 each coordinate Zn(2+).

Belongs to the bacterial ribosomal protein bL31 family. Type A subfamily. In terms of assembly, part of the 50S ribosomal subunit. It depends on Zn(2+) as a cofactor.

Binds the 23S rRNA. The sequence is that of Large ribosomal subunit protein bL31 from Glaesserella parasuis serovar 5 (strain SH0165) (Haemophilus parasuis).